We begin with the raw amino-acid sequence, 167 residues long: Mediator of RNA polymerase II transcription subunit 10 (167 aa).

Residues 54-92 form a disordered region; that stretch reads STHTKPHPPPPPPPQPTDPTTAAAPALRDNPDPPLSSIQ. Over residues 60–70 the composition is skewed to pro residues; the sequence is HPPPPPPPQPT.

It belongs to the Mediator complex subunit 10 family. As to quaternary structure, component of the Mediator complex.

It localises to the nucleus. Its function is as follows. Component of the Mediator complex, a coactivator involved in the regulated transcription of nearly all RNA polymerase II-dependent genes. Mediator functions as a bridge to convey information from gene-specific regulatory proteins to the basal RNA polymerase II transcription machinery. Mediator is recruited to promoters by direct interactions with regulatory proteins and serves as a scaffold for the assembly of a functional preinitiation complex with RNA polymerase II and the general transcription factors. This is Mediator of RNA polymerase II transcription subunit 10 (nut2) from Aspergillus clavatus (strain ATCC 1007 / CBS 513.65 / DSM 816 / NCTC 3887 / NRRL 1 / QM 1276 / 107).